The sequence spans 141 residues: Large ribosomal subunit protein uL11 (141 aa).

Belongs to the universal ribosomal protein uL11 family. Part of the ribosomal stalk of the 50S ribosomal subunit. Interacts with L10 and the large rRNA to form the base of the stalk. L10 forms an elongated spine to which L12 dimers bind in a sequential fashion forming a multimeric L10(L12)X complex. One or more lysine residues are methylated.

In terms of biological role, forms part of the ribosomal stalk which helps the ribosome interact with GTP-bound translation factors. The chain is Large ribosomal subunit protein uL11 from Chloroherpeton thalassium (strain ATCC 35110 / GB-78).